A 106-amino-acid polypeptide reads, in one-letter code: PTS system fructose-like EIIB component 2 (106 aa).

The PTS EIIB type-2 domain maps to 1 to 103 (MTKIIAVTAC…IMSKIEAHLA (103 aa)). The Phosphocysteine intermediate role is filled by cysteine 10. Cysteine 10 carries the post-translational modification Phosphocysteine; by EIIA.

Its subcellular location is the cytoplasm. The catalysed reaction is D-fructose(out) + N(pros)-phospho-L-histidyl-[protein] = D-fructose 1-phosphate(in) + L-histidyl-[protein]. In terms of biological role, the phosphoenolpyruvate-dependent sugar phosphotransferase system (sugar PTS), a major carbohydrate active transport system, catalyzes the phosphorylation of incoming sugar substrates concomitantly with their translocation across the cell membrane. The enzyme II FrwABC PTS system is involved in fructose transport. This Escherichia coli O157:H7 protein is PTS system fructose-like EIIB component 2 (frwB).